Reading from the N-terminus, the 1865-residue chain is Endoribonuclease Dicer (1865 aa).

Positions 41–213 (LLEAALEHNT…DLEEKIQNLE (173 aa)) constitute a Helicase ATP-binding domain. 54–61 (LNTGSGKT) provides a ligand contact to ATP. Residues 161–164 (DECH) carry the DECH box motif. The segment at 397–417 (SWSDSEDDDEDEEAEAKEKTE) is disordered. Acidic residues predominate over residues 400 to 411 (DSEDDDEDEEAE). Residues 419–588 (NFPSPFTNIL…SAECNDFELE (170 aa)) form the Helicase C-terminal domain. The Dicer dsRNA-binding fold domain maps to 616-708 (AIGHVNRYCA…MPVGKETVKY (93 aa)). Residues 713 to 732 (DLHDEEETSVPGRPGSTKRR) form a disordered region. One can recognise a PAZ domain in the interval 881-1028 (KFMEDIEKSE…LVPELCAIHP (148 aa)). Composition is skewed to polar residues over residues 1111–1128 (GTSS…SMEV) and 1192–1201 (STQTTTSVSV). Disordered regions lie at residues 1111–1142 (GTSS…PDEK) and 1190–1259 (DLST…DCRS). Low complexity predominate over residues 1240–1252 (SETATSTPAPSET). Residues 1262–1385 (AGPAWDSPKT…TDKWDSDENK (124 aa)) form the RNase III 1 domain. Positions 1298, 1377, and 1380 each coordinate Mg(2+). The interval 1373–1417 (KSSTDKWDSDENKDLANGKASDDEDEDDDDEPEEAEVEPSKEDVN) is disordered. Positions 1374–1388 (SSTDKWDSDENKDLA) are enriched in basic and acidic residues. Residues 1394–1409 (DDEDEDDDDEPEEAEV) are compositionally biased toward acidic residues. One can recognise an RNase III 2 domain in the interval 1609–1767 (FLNFESKINY…LAGAIYMDSG (159 aa)). Mg(2+) is bound by residues Glu-1648, Asp-1753, and Glu-1756. Positions 1792-1857 (VPRSPVRELL…ARRALRSLKA (66 aa)) constitute a DRBM domain.

This sequence belongs to the helicase family. Dicer subfamily. Component of the RISC loading complex (RLC), or micro-RNA (miRNA) loading complex (miRLC), which is composed of dicer1, ago2 and tarbp2; dicer1 and tarbp2 are required to process precursor miRNAs (pre-miRNAs) to mature miRNAs and then load them onto ago2. Note that the trimeric RLC/miRLC is also referred to as RISC. Mg(2+) is required as a cofactor. Requires Mn(2+) as cofactor.

It is found in the cytoplasm. The catalysed reaction is Endonucleolytic cleavage to 5'-phosphomonoester.. Functionally, double-stranded RNA (dsRNA) endoribonuclease playing a central role in short dsRNA-mediated post-transcriptional gene silencing. Cleaves naturally occurring long dsRNAs and short hairpin pre-microRNAs (miRNA) into fragments of twenty-one to twenty-three nucleotides with 3' overhang of two nucleotides, producing respectively short interfering RNAs (siRNA) and mature microRNAs. SiRNAs and miRNAs serve as guide to direct the RNA-induced silencing complex (RISC) to complementary RNAs to degrade them or prevent their translation. Gene silencing mediated by siRNAs, also called RNA interference, controls the elimination of transcripts from mobile and repetitive DNA elements of the genome but also the degradation of exogenous RNA of viral origin for instance. The miRNA pathway on the other side is a mean to specifically regulate the expression of target genes. This Danio rerio (Zebrafish) protein is Endoribonuclease Dicer (dicer1).